We begin with the raw amino-acid sequence, 368 residues long: Phosphoribosylaminoimidazole-succinocarboxamide synthase (368 aa).

It belongs to the SAICAR synthetase family.

It catalyses the reaction 5-amino-1-(5-phospho-D-ribosyl)imidazole-4-carboxylate + L-aspartate + ATP = (2S)-2-[5-amino-1-(5-phospho-beta-D-ribosyl)imidazole-4-carboxamido]succinate + ADP + phosphate + 2 H(+). The protein operates within purine metabolism; IMP biosynthesis via de novo pathway; 5-amino-1-(5-phospho-D-ribosyl)imidazole-4-carboxamide from 5-amino-1-(5-phospho-D-ribosyl)imidazole-4-carboxylate: step 1/2. The protein is Phosphoribosylaminoimidazole-succinocarboxamide synthase of Vibrio cholerae serotype O1 (strain ATCC 39315 / El Tor Inaba N16961).